A 434-amino-acid polypeptide reads, in one-letter code: Nicotinate phosphoribosyltransferase (434 aa).

Position 242 is a phosphohistidine; by autocatalysis (H242).

It belongs to the NAPRTase family. Post-translationally, transiently phosphorylated on a His residue during the reaction cycle. Phosphorylation strongly increases the affinity for substrates and increases the rate of nicotinate D-ribonucleotide production. Dephosphorylation regenerates the low-affinity form of the enzyme, leading to product release.

The enzyme catalyses nicotinate + 5-phospho-alpha-D-ribose 1-diphosphate + ATP + H2O = nicotinate beta-D-ribonucleotide + ADP + phosphate + diphosphate. The protein operates within cofactor biosynthesis; NAD(+) biosynthesis; nicotinate D-ribonucleotide from nicotinate: step 1/1. In terms of biological role, catalyzes the synthesis of beta-nicotinate D-ribonucleotide from nicotinate and 5-phospho-D-ribose 1-phosphate at the expense of ATP. This is Nicotinate phosphoribosyltransferase from Brucella abortus (strain S19).